The sequence spans 123 residues: Neuropeptide-like peptides nlp-40 (123 aa).

Positions 1–17 are cleaved as a signal peptide; it reads MKLVILLSFVATVAVFA. 3 propeptides span residues 30 to 31, 66 to 67, and 75 to 76; these read RA and KR.

In terms of tissue distribution, expressed in intestinal cells.

The protein localises to the secreted. The protein resides in the cytoplasmic vesicle. In terms of biological role, neuropeptide ligand for the G-protein coupled receptor aex-2. Activates and regulates the rhythmic calcium influx in DVB GABergic neurons during the defecation motor program, which is a coordinated series of three muscle contractions that occurs every 45 seconds. This is Neuropeptide-like peptides nlp-40 from Caenorhabditis elegans.